We begin with the raw amino-acid sequence, 503 residues long: Cobyric acid synthase (503 aa).

Residues 251–450 (DLDIAVIRLP…IHGIFENAAF (200 aa)) form the GATase cobBQ-type domain. The active-site Nucleophile is Cys331. His442 is an active-site residue.

This sequence belongs to the CobB/CobQ family. CobQ subfamily.

It functions in the pathway cofactor biosynthesis; adenosylcobalamin biosynthesis. In terms of biological role, catalyzes amidations at positions B, D, E, and G on adenosylcobyrinic A,C-diamide. NH(2) groups are provided by glutamine, and one molecule of ATP is hydrogenolyzed for each amidation. The protein is Cobyric acid synthase of Dehalococcoides mccartyi (strain ATCC BAA-2100 / JCM 16839 / KCTC 5957 / BAV1).